The primary structure comprises 342 residues: Ribosomal RNA small subunit methyltransferase C (342 aa).

This sequence belongs to the methyltransferase superfamily. RsmC family. As to quaternary structure, monomer.

Its subcellular location is the cytoplasm. It catalyses the reaction guanosine(1207) in 16S rRNA + S-adenosyl-L-methionine = N(2)-methylguanosine(1207) in 16S rRNA + S-adenosyl-L-homocysteine + H(+). Functionally, specifically methylates the guanine in position 1207 of 16S rRNA in the 30S particle. This is Ribosomal RNA small subunit methyltransferase C from Cronobacter sakazakii (strain ATCC BAA-894) (Enterobacter sakazakii).